The primary structure comprises 453 residues: Probable tRNA methyltransferase 9B (453 aa).

Serine 214 is modified (phosphoserine).

The protein belongs to the methyltransferase superfamily.

May modify wobble uridines in specific arginine and glutamic acid tRNAs. Acts as a tumor suppressor by promoting the expression of LIN9. The protein is Probable tRNA methyltransferase 9B (TRMT9B) of Bos taurus (Bovine).